Consider the following 303-residue polypeptide: N-acetyl-D-glucosamine kinase (303 aa).

ATP contacts are provided by residues 4-11 and 133-140; these read GFDIGGTK and GVGGGLIF. Positions 157, 177, 179, and 184 each coordinate Zn(2+).

It belongs to the ROK (NagC/XylR) family. NagK subfamily.

It carries out the reaction N-acetyl-D-glucosamine + ATP = N-acetyl-D-glucosamine 6-phosphate + ADP + H(+). It functions in the pathway cell wall biogenesis; peptidoglycan recycling. Functionally, catalyzes the phosphorylation of N-acetyl-D-glucosamine (GlcNAc) derived from cell-wall degradation, yielding GlcNAc-6-P. The protein is N-acetyl-D-glucosamine kinase of Escherichia coli O9:H4 (strain HS).